A 949-amino-acid polypeptide reads, in one-letter code: Nonsense-mediated mRNA decay factor SMG8 (949 aa).

Disordered stretches follow at residues 564–607, 624–652, and 748–768; these read SGAR…LSPT, NESQ…DTEN, and PKQQ…QQRW. Acidic residues predominate over residues 571–581; it reads EGDDEPEDEVV. Residues 594–607 show a composition bias toward polar residues; that stretch reads NTASNGCSQPLSPT. Positions 624–648 are enriched in low complexity; sequence NESQASSEQLSNSEQNTSSSGTSSA. Residues 749–768 show a composition bias toward basic residues; sequence KQQHHTHHQQQHPGKKQQRW.

The protein belongs to the SMG8 family.

Involved in nonsense-mediated decay (NMD) of mRNAs containing premature stop codons. Probable component of kinase complex containing nonC and recruited to stalled ribosomes. The polypeptide is Nonsense-mediated mRNA decay factor SMG8 (Drosophila erecta (Fruit fly)).